A 122-amino-acid polypeptide reads, in one-letter code: MSKALLKFVRLSPTKARLIARQIQGMNAELAIASLEFTPNKAARVLSKVVASAVANGSLDAKSALIVSCRVDAGPVLRRSIPRAKGRATAIRKPTSHVFVEVAEGKEMKSSKSHKKNQAEGK.

The segment at 102–122 is disordered; that stretch reads VAEGKEMKSSKSHKKNQAEGK.

It belongs to the universal ribosomal protein uL22 family. As to quaternary structure, part of the 50S ribosomal subunit.

Functionally, this protein binds specifically to 23S rRNA; its binding is stimulated by other ribosomal proteins, e.g. L4, L17, and L20. It is important during the early stages of 50S assembly. It makes multiple contacts with different domains of the 23S rRNA in the assembled 50S subunit and ribosome. In terms of biological role, the globular domain of the protein is located near the polypeptide exit tunnel on the outside of the subunit, while an extended beta-hairpin is found that lines the wall of the exit tunnel in the center of the 70S ribosome. The chain is Large ribosomal subunit protein uL22 from Helicobacter pylori (strain HPAG1).